A 204-amino-acid polypeptide reads, in one-letter code: ATP-dependent Clp protease proteolytic subunit (204 aa).

Catalysis depends on Ser-102, which acts as the Nucleophile. His-127 is a catalytic residue.

The protein belongs to the peptidase S14 family. As to quaternary structure, fourteen ClpP subunits assemble into 2 heptameric rings which stack back to back to give a disk-like structure with a central cavity, resembling the structure of eukaryotic proteasomes.

It localises to the cytoplasm. The catalysed reaction is Hydrolysis of proteins to small peptides in the presence of ATP and magnesium. alpha-casein is the usual test substrate. In the absence of ATP, only oligopeptides shorter than five residues are hydrolyzed (such as succinyl-Leu-Tyr-|-NHMec, and Leu-Tyr-Leu-|-Tyr-Trp, in which cleavage of the -Tyr-|-Leu- and -Tyr-|-Trp bonds also occurs).. In terms of biological role, cleaves peptides in various proteins in a process that requires ATP hydrolysis. Has a chymotrypsin-like activity. Plays a major role in the degradation of misfolded proteins. This is ATP-dependent Clp protease proteolytic subunit from Neisseria gonorrhoeae (strain ATCC 700825 / FA 1090).